Reading from the N-terminus, the 323-residue chain is tRNA U34 carboxymethyltransferase (323 aa).

Carboxy-S-adenosyl-L-methionine contacts are provided by residues Lys-91, Trp-105, Lys-110, Gly-130, 152 to 154, 181 to 182, Met-196, Tyr-200, and Arg-315; these read DPS and IE.

It belongs to the class I-like SAM-binding methyltransferase superfamily. CmoB family. As to quaternary structure, homotetramer.

The catalysed reaction is carboxy-S-adenosyl-L-methionine + 5-hydroxyuridine(34) in tRNA = 5-carboxymethoxyuridine(34) in tRNA + S-adenosyl-L-homocysteine + H(+). Its function is as follows. Catalyzes carboxymethyl transfer from carboxy-S-adenosyl-L-methionine (Cx-SAM) to 5-hydroxyuridine (ho5U) to form 5-carboxymethoxyuridine (cmo5U) at position 34 in tRNAs. The protein is tRNA U34 carboxymethyltransferase of Vibrio parahaemolyticus serotype O3:K6 (strain RIMD 2210633).